Reading from the N-terminus, the 317-residue chain is MRAKLLGIVLTTPIAISSFASTETLSFTPDNINADISLGTLSGKTKERVYLAEEGGRKVSQLDWKFNNAAIIKGAINWDLMPQISIGAAGWTTLGSRGGNMVDQDWMDSSNPGTWTDESRHPDTQLNYANEFDLNIKGWLLNEPNYRLGLMAGYQESRYSFTARGGSYIYSSEEGFRDDIGSFPNGERAIGYKQRFKMPYIGLTGSYRYEDFELGGTFKYSGWVEASDNDEHYDPGKRITYRSKVKDQNYYSVSVNAGYYVTPNAKVYVEGTWNRVTNKKGNTSLYDHNDNTSDYSKNGAGIENYNFITTAGLKYTF.

The N-terminal stretch at 1-20 (MRAKLLGIVLTTPIAISSFA) is a signal peptide. The Periplasmic segment spans residues 21–31 (STETLSFTPDN). A beta stranded transmembrane segment spans residues 32–41 (INADISLGTL). The Extracellular portion of the chain corresponds to 42–69 (SGKTKERVYLAEEGGRKVSQLDWKFNNA). The chain crosses the membrane as a beta stranded span at residues 70 to 78 (AIIKGAINW). Topologically, residues 79 to 83 (DLMPQ) are periplasmic. The beta stranded transmembrane segment at 84–92 (ISIGAAGWT) threads the bilayer. Topologically, residues 93-130 (TLGSRGGNMVDQDWMDSSNPGTWTDESRHPDTQLNYAN) are extracellular. Catalysis depends on residues D103 and D105. Residues 131–140 (EFDLNIKGWL) traverse the membrane as a beta stranded segment. Over 141 to 145 (LNEPN) the chain is Periplasmic. The chain crosses the membrane as a beta stranded span at residues 146 to 156 (YRLGLMAGYQE). At 157-197 (SRYSFTARGGSYIYSSEEGFRDDIGSFPNGERAIGYKQRFK) the chain is on the extracellular side. Residues 198-209 (MPYIGLTGSYRY) form a beta stranded membrane-spanning segment. Residues 210–211 (ED) are Periplasmic-facing. Residues 212–221 (FELGGTFKYS) form a beta stranded membrane-spanning segment. Over 222-250 (GWVEASDNDEHYDPGKRITYRSKVKDQNY) the chain is Extracellular. Active-site residues include D230 and H232. A beta stranded transmembrane segment spans residues 251-261 (YSVSVNAGYYV). Residues 262 to 264 (TPN) are Periplasmic-facing. A beta stranded transmembrane segment spans residues 265–274 (AKVYVEGTWN). Topologically, residues 275–306 (RVTNKKGNTSLYDHNDNTSDYSKNGAGIENYN) are extracellular. The chain crosses the membrane as a beta stranded span at residues 307-316 (FITTAGLKYT). Residue F317 is a topological domain, periplasmic.

This sequence belongs to the peptidase A26 family. In terms of assembly, homopentamer.

It localises to the cell outer membrane. The enzyme catalyses Has a virtual requirement for Arg in the P1 position and a slightly less stringent preference for this residue in the P1' position, which can also contain Lys, Gly or Val.. Inhibited by zinc. Functionally, protease that can cleave T7 RNA polymerase, ferric enterobactin receptor protein (FEP), antimicrobial peptide protamine and other proteins. This protease has a specificity for paired basic residues. In Escherichia coli O157:H7, this protein is Protease 7 (ompT).